Consider the following 218-residue polypeptide: Ras-related protein Rab-27B (218 aa).

Thr2 bears the N-acetylthreonine mark. 16–24 (GDSGVGKTT) contributes to the GTP binding site. Positions 38 to 46 (FITTVGIDF) match the Effector region motif. GTP-binding positions include 74 to 78 (DTAGQ), 133 to 136 (NKAD), and 163 to 165 (SAA). Residues Cys123 and Cys188 are joined by a disulfide bond. The tract at residues 194–218 (IPDTVNGGNSGNLDGEKPPEKKCIC) is disordered. A compositionally biased stretch (basic and acidic residues) spans 207–218 (DGEKPPEKKCIC). 2 S-geranylgeranyl cysteine lipidation sites follow: Cys216 and Cys218. Cys218 carries the cysteine methyl ester modification.

It belongs to the small GTPase superfamily. Rab family. Interacts with SYTL2, SYTL4, MYRIP and MLPH. Interacts with RPH3A and RPH3A. Interacts (GDP-bound form preferentially) with DENND10. In terms of tissue distribution, expressed primarily in testis.

Its subcellular location is the membrane. It is found in the late endosome. It catalyses the reaction GTP + H2O = GDP + phosphate + H(+). Regulated by guanine nucleotide exchange factors (GEFs) which promote the exchange of bound GDP for free GTP, GTPase activating proteins (GAPs) which increase the GTP hydrolysis activity, and GDP dissociation inhibitors which inhibit the dissociation of the nucleotide from the GTPase. Activated by GEFs such as DENND10. Small GTPase which cycles between active GTP-bound and inactive GDP-bound states. In its active state, binds to a variety of effector proteins to regulate homeostasis of late endocytic pathway, including endosomal positioning, maturation and secretion. Plays a role in NTRK2/TRKB axonal anterograde transport by facilitating the association of NTRK2/TRKB with KLC1. May be involved in targeting uroplakins to urothelial apical membranes. This is Ras-related protein Rab-27B (RAB27B) from Homo sapiens (Human).